A 288-amino-acid polypeptide reads, in one-letter code: Probable ketoamine kinase SAOUHSC_02908 (288 aa).

86-88 serves as a coordination point for ATP; the sequence is TYL. The active-site Proton acceptor is D191.

Belongs to the fructosamine kinase family.

The enzyme catalyses N(6)-(D-ribulosyl)-L-lysine + ATP = N(6)-(3-O-phospho-D-ribulosyl)-L-lysine + ADP + H(+). It catalyses the reaction N(6)-(D-erythrulosyl)-L-lysine + ATP = N(6)-(3-O-phospho-D-erythrulosyl)-L-lysine + ADP + H(+). It carries out the reaction N(6)-D-ribulosyl-L-lysyl-[protein] + ATP = N(6)-(3-O-phospho-D-ribulosyl)-L-lysyl-[protein] + ADP + H(+). The catalysed reaction is N(6)-(D-erythrulosyl)-L-lysyl-[protein] + ATP = N(6)-(3-O-phospho-D-erythrulosyl)-L-lysyl-[protein] + ADP + H(+). Ketoamine kinase that phosphorylates ketoamines, such as erythruloselysine and ribuloselysine, on the third carbon of the sugar moiety to generate ketoamine 3-phosphate. Has higher activity on free lysine (erythruloselysine and ribuloselysine), than on ribuloselysine and erythruloselysine residues on glycated proteins. This chain is Probable ketoamine kinase SAOUHSC_02908, found in Staphylococcus aureus (strain NCTC 8325 / PS 47).